The following is a 353-amino-acid chain: Aromatic amino acid aminotransferase (353 aa).

Lys217 is subject to N6-(pyridoxal phosphate)lysine.

This sequence belongs to the class-II pyridoxal-phosphate-dependent aminotransferase family. As to quaternary structure, homodimer. It depends on pyridoxal 5'-phosphate as a cofactor.

The catalysed reaction is an aromatic L-alpha-amino acid + 2-oxoglutarate = an aromatic oxo-acid + L-glutamate. Aminotransferase that catalyzes the conversion of aromatic amino acids and 2-oxoglutarate into corresponding aromatic oxo acids and L-glutamate. This is Aromatic amino acid aminotransferase from Mycobacterium bovis (strain ATCC BAA-935 / AF2122/97).